The following is a 270-amino-acid chain: Large ribosomal subunit protein uL2c (270 aa).

The tract at residues 221-245 (NPIDHPHGGGEGRAPIGRNQPKTPW) is disordered.

Belongs to the universal ribosomal protein uL2 family. As to quaternary structure, part of the 50S ribosomal subunit.

The protein resides in the plastid. In Cuscuta gronovii (Common dodder), this protein is Large ribosomal subunit protein uL2c (rpl2).